The sequence spans 327 residues: Cytochrome c oxidase subunit 2 (327 aa).

The first 23 residues, 1-23 (MEQIPASIWTLTAGVVVTLISFW), serve as a signal peptide directing secretion. Helical transmembrane passes span 56 to 78 (LFLV…AGEE) and 96 to 114 (AIPA…DIFQ). Residues H221, C255, C259, and H263 each coordinate Cu cation.

It belongs to the cytochrome c oxidase subunit 2 family. It depends on Cu cation as a cofactor.

It is found in the cell membrane. It carries out the reaction 4 Fe(II)-[cytochrome c] + O2 + 8 H(+)(in) = 4 Fe(III)-[cytochrome c] + 2 H2O + 4 H(+)(out). Functionally, subunits I and II form the functional core of the enzyme complex. Electrons originating in cytochrome c are transferred via heme a and Cu(A) to the binuclear center formed by heme a3 and Cu(B). This Thermostichus vulcanus (Synechococcus vulcanus) protein is Cytochrome c oxidase subunit 2 (ctaC).